A 283-amino-acid polypeptide reads, in one-letter code: Pseudokinase OPG198 (283 aa).

Residues Met-1 and Lys-30 each coordinate ATP. The Protein kinase domain maps to 1–283 (MESFKYCFDN…DRLRRLFIQD (283 aa)).

The protein belongs to the protein kinase superfamily. Ser/Thr protein kinase family. Poxviruses subfamily. Interacts with B1/VPK1. Interacts with host VRK1. Interacts with host VRK2.

It localises to the host nucleus. With respect to regulation, both catalytically active kinases B1/VPK1 and host VRK2 repress B12 inhibitory activity in a B1/VPK1 deletion mutant strain. Its function is as follows. Pseudokinase that plays a role in viral DNA replication repression by activating the antiviral protein BANF1 and inhibiting the activity of host VRK1, a cellular modulator of BANF1. In Homo sapiens (Human), this protein is Pseudokinase OPG198 (OPG198).